The sequence spans 641 residues: Threonine--tRNA ligase (641 aa).

The TGS domain occupies 1-61 (MPVITLPDGS…ENDTELAIVT (61 aa)). The segment at 242–533 (DHRKIGKKLG…LIEEYEGAFP (292 aa)) is catalytic. Zn(2+) contacts are provided by Cys333, His384, and His510.

Belongs to the class-II aminoacyl-tRNA synthetase family. As to quaternary structure, homodimer. Requires Zn(2+) as cofactor.

It is found in the cytoplasm. It carries out the reaction tRNA(Thr) + L-threonine + ATP = L-threonyl-tRNA(Thr) + AMP + diphosphate + H(+). Functionally, catalyzes the attachment of threonine to tRNA(Thr) in a two-step reaction: L-threonine is first activated by ATP to form Thr-AMP and then transferred to the acceptor end of tRNA(Thr). Also edits incorrectly charged L-seryl-tRNA(Thr). This chain is Threonine--tRNA ligase, found in Marinobacter nauticus (strain ATCC 700491 / DSM 11845 / VT8) (Marinobacter aquaeolei).